Here is a 119-residue protein sequence, read N- to C-terminus: Integration host factor subunit alpha (119 aa).

Positions I96–E119 are disordered.

It belongs to the bacterial histone-like protein family. Heterodimer of an alpha and a beta chain.

This protein is one of the two subunits of integration host factor, a specific DNA-binding protein that functions in genetic recombination as well as in transcriptional and translational control. The chain is Integration host factor subunit alpha from Bradyrhizobium sp. (strain ORS 278).